The chain runs to 578 residues: Proline--tRNA ligase (578 aa).

The protein belongs to the class-II aminoacyl-tRNA synthetase family. ProS type 1 subfamily. In terms of assembly, homodimer.

The protein localises to the cytoplasm. The catalysed reaction is tRNA(Pro) + L-proline + ATP = L-prolyl-tRNA(Pro) + AMP + diphosphate. Functionally, catalyzes the attachment of proline to tRNA(Pro) in a two-step reaction: proline is first activated by ATP to form Pro-AMP and then transferred to the acceptor end of tRNA(Pro). As ProRS can inadvertently accommodate and process non-cognate amino acids such as alanine and cysteine, to avoid such errors it has two additional distinct editing activities against alanine. One activity is designated as 'pretransfer' editing and involves the tRNA(Pro)-independent hydrolysis of activated Ala-AMP. The other activity is designated 'posttransfer' editing and involves deacylation of mischarged Ala-tRNA(Pro). The misacylated Cys-tRNA(Pro) is not edited by ProRS. In Syntrophus aciditrophicus (strain SB), this protein is Proline--tRNA ligase.